The following is a 509-amino-acid chain: Methionine--tRNA ligase (509 aa).

The 'HIGH' region signature appears at 12-22; the sequence is YYVNDVPHIGH. Residues 295 to 299 carry the 'KMSKS' region motif; sequence KISKS. K298 contacts ATP.

Belongs to the class-I aminoacyl-tRNA synthetase family. MetG type 2B subfamily. As to quaternary structure, monomer.

It is found in the cytoplasm. The enzyme catalyses tRNA(Met) + L-methionine + ATP = L-methionyl-tRNA(Met) + AMP + diphosphate. Its function is as follows. Is required not only for elongation of protein synthesis but also for the initiation of all mRNA translation through initiator tRNA(fMet) aminoacylation. This is Methionine--tRNA ligase from Rickettsia bellii (strain RML369-C).